The chain runs to 143 residues: Peptide methionine sulfoxide reductase B9 (143 aa).

Positions 19 to 140 (DQDWRAILSP…NSVSLKFSEI (122 aa)) constitute a MsrB domain. 4 residues coordinate Zn(2+): Cys58, Cys61, Cys104, and Cys107. A disulfide bond links Cys76 and Cys129. The active-site Nucleophile is Cys129.

Belongs to the MsrB Met sulfoxide reductase family. Zn(2+) is required as a cofactor.

It is found in the cytoplasm. It localises to the cytosol. It carries out the reaction L-methionyl-[protein] + [thioredoxin]-disulfide + H2O = L-methionyl-(R)-S-oxide-[protein] + [thioredoxin]-dithiol. Its function is as follows. Catalyzes the reduction of methionine sulfoxide (MetSO) to methionine in proteins. Plays a protective role against oxidative stress by restoring activity to proteins that have been inactivated by methionine oxidation. MSRB family specifically reduces the MetSO R-enantiomer. This chain is Peptide methionine sulfoxide reductase B9 (MSRB9), found in Arabidopsis thaliana (Mouse-ear cress).